We begin with the raw amino-acid sequence, 360 residues long: Photosystem II protein D1 (360 aa).

Helical transmembrane passes span 29–46, 118–133, and 142–156; these read YIGW…TATT, HFLL…EWEF, and WISV…AASA. His118 is a chlorophyll a binding site. Trp126 contacts pheophytin a. [CaMn4O5] cluster contacts are provided by Asp170 and Glu189. A helical transmembrane segment spans residues 197–218; that stretch reads FHQLGVAGVFGGSLFSAMHGSL. His198 is a chlorophyll a binding site. A quinone is bound by residues His215 and 264 to 265; that span reads SF. Fe cation is bound at residue His215. His272 contacts Fe cation. Residues 274-288 traverse the membrane as a helical segment; sequence FLGLWPVVGIWFTAL. [CaMn4O5] cluster-binding residues include His332, Glu333, Asp342, and Ala344. Positions 345–360 are excised as a propeptide; sequence SGESLPVALTAPAVIG.

It belongs to the reaction center PufL/M/PsbA/D family. As to quaternary structure, PSII is composed of 1 copy each of membrane proteins PsbA, PsbB, PsbC, PsbD, PsbE, PsbF, PsbH, PsbI, PsbJ, PsbK, PsbL, PsbM, PsbT, PsbX, PsbY, PsbZ, Psb30/Ycf12, at least 3 peripheral proteins of the oxygen-evolving complex and a large number of cofactors. It forms dimeric complexes. The cofactor is The D1/D2 heterodimer binds P680, chlorophylls that are the primary electron donor of PSII, and subsequent electron acceptors. It shares a non-heme iron and each subunit binds pheophytin, quinone, additional chlorophylls, carotenoids and lipids. D1 provides most of the ligands for the Mn4-Ca-O5 cluster of the oxygen-evolving complex (OEC). There is also a Cl(-1) ion associated with D1 and D2, which is required for oxygen evolution. The PSII complex binds additional chlorophylls, carotenoids and specific lipids.. Post-translationally, tyr-161 forms a radical intermediate that is referred to as redox-active TyrZ, YZ or Y-Z. In terms of processing, C-terminally processed by CTPA; processing is essential to allow assembly of the oxygen-evolving complex and thus photosynthetic growth.

The protein resides in the plastid. Its subcellular location is the chloroplast thylakoid membrane. The enzyme catalyses 2 a plastoquinone + 4 hnu + 2 H2O = 2 a plastoquinol + O2. Functionally, photosystem II (PSII) is a light-driven water:plastoquinone oxidoreductase that uses light energy to abstract electrons from H(2)O, generating O(2) and a proton gradient subsequently used for ATP formation. It consists of a core antenna complex that captures photons, and an electron transfer chain that converts photonic excitation into a charge separation. The D1/D2 (PsbA/PsbD) reaction center heterodimer binds P680, the primary electron donor of PSII as well as several subsequent electron acceptors. The sequence is that of Photosystem II protein D1 from Guillardia theta (Cryptophyte).